Reading from the N-terminus, the 234-residue chain is uncharacterized protein (234 aa).

This is an uncharacterized protein from Acheta domesticus (House cricket).